A 424-amino-acid polypeptide reads, in one-letter code: UPF0415 protein C7orf25 homolog (424 aa).

Belongs to the UPF0415 family.

The polypeptide is UPF0415 protein C7orf25 homolog (Xenopus tropicalis (Western clawed frog)).